A 362-amino-acid polypeptide reads, in one-letter code: Shewanella-like protein phosphatase 1 (362 aa).

Residues 1–23 (MIFKKALYILLFLYIAIVKKGES) form the signal peptide. Residues Asp-65, His-67, Asp-101, and Asn-136 each coordinate Mn(2+). Catalysis depends on His-137, which acts as the Proton donor. His-196 is a Mn(2+) binding site.

It belongs to the metallophosphoesterase superfamily. SLP family. Mn(2+) serves as cofactor.

In terms of biological role, phosphatase which plays an essential role in the development and differentiation of the ookinete and in the formation of ookinete micronemes. The polypeptide is Shewanella-like protein phosphatase 1 (Plasmodium berghei (strain Anka)).